The following is a 310-amino-acid chain: Formimidoylglutamase (310 aa).

Positions 120, 148, 150, 152, 233, and 235 each coordinate Mn(2+).

Belongs to the arginase family. It depends on Mn(2+) as a cofactor.

It catalyses the reaction N-formimidoyl-L-glutamate + H2O = formamide + L-glutamate. It functions in the pathway amino-acid degradation; L-histidine degradation into L-glutamate; L-glutamate from N-formimidoyl-L-glutamate (hydrolase route): step 1/1. Functionally, catalyzes the conversion of N-formimidoyl-L-glutamate to L-glutamate and formamide. This is Formimidoylglutamase from Nocardia farcinica (strain IFM 10152).